We begin with the raw amino-acid sequence, 295 residues long: Structure-specific endonuclease subunit SLX1 (295 aa).

A GIY-YIG domain is found at 11-93 (EFYGVYILQS…QHPKTSRHMA (83 aa)). The segment at 85–133 (HPKTSRHMAGGGGSVTATAETAKSAPVAGKSDATSPAKNRRNAAPVARS) is disordered. The SLX1-type zinc-finger motif lies at 205–272 (CCLCSDAIDY…IPSDVSCSQC (68 aa)).

The protein belongs to the SLX1 family. In terms of assembly, forms a heterodimer with SLX4. A divalent metal cation is required as a cofactor.

It localises to the nucleus. In terms of biological role, catalytic subunit of the SLX1-SLX4 structure-specific endonuclease that resolves DNA secondary structures generated during DNA repair and recombination. Has endonuclease activity towards branched DNA substrates, introducing single-strand cuts in duplex DNA close to junctions with ss-DNA. This is Structure-specific endonuclease subunit SLX1 from Meyerozyma guilliermondii (strain ATCC 6260 / CBS 566 / DSM 6381 / JCM 1539 / NBRC 10279 / NRRL Y-324) (Yeast).